A 268-amino-acid chain; its full sequence is MALNFPNIDPVIVKFGPFDIFGQTFEPALRWYGFTYLVGFVAAMWLLNRQADRSNGLWSREQVSDLLFYGFLGVILGGRIGYVLFYHFDYFLASPMYLFKISEGGMSFHGGLIGVITAMIYITWKQKRTFFAVADMVAPVVPIGLGAGRIGNFINGELWGRVTDVPWAMVFPSGGPEPRHPSQLYQFALEGVALFLLLYWFSKRTKKVGAVSGMFLLGYGIFRVIVETVRQPDAQLGLYWGLMTMGQILSVPMILFGLYLILRPEGKQ.

7 consecutive transmembrane segments (helical) span residues 27 to 47, 66 to 86, 104 to 124, 130 to 150, 181 to 201, 208 to 228, and 242 to 262; these read PALRWYGFTYLVGFVAAMWLL, LLFYGFLGVILGGRIGYVLFY, GGMSFHGGLIGVITAMIYITW, FFAVADMVAPVVPIGLGAGRI, PSQLYQFALEGVALFLLLYWF, VGAVSGMFLLGYGIFRVIVET, and LMTMGQILSVPMILFGLYLIL. Arg-149 contacts a 1,2-diacyl-sn-glycero-3-phospho-(1'-sn-glycerol).

This sequence belongs to the Lgt family.

The protein localises to the cell inner membrane. It catalyses the reaction L-cysteinyl-[prolipoprotein] + a 1,2-diacyl-sn-glycero-3-phospho-(1'-sn-glycerol) = an S-1,2-diacyl-sn-glyceryl-L-cysteinyl-[prolipoprotein] + sn-glycerol 1-phosphate + H(+). It participates in protein modification; lipoprotein biosynthesis (diacylglyceryl transfer). In terms of biological role, catalyzes the transfer of the diacylglyceryl group from phosphatidylglycerol to the sulfhydryl group of the N-terminal cysteine of a prolipoprotein, the first step in the formation of mature lipoproteins. In Shewanella oneidensis (strain ATCC 700550 / JCM 31522 / CIP 106686 / LMG 19005 / NCIMB 14063 / MR-1), this protein is Phosphatidylglycerol--prolipoprotein diacylglyceryl transferase.